Here is a 353-residue protein sequence, read N- to C-terminus: Serine proteinase inhibitor 1 (353 aa).

Belongs to the serpin family. Poxviruses subfamily.

The protein localises to the host cytoplasm. In terms of biological role, plays a role in mediating viral host range. May act to inhibit a caspase independent form of apoptosis to allow efficient virus replication in infected cells. The protein is Serine proteinase inhibitor 1 (OPG208) of Vaccinia virus (strain Copenhagen) (VACV).